A 310-amino-acid chain; its full sequence is UPF0761 membrane protein VFMJ11_0098 (310 aa).

A run of 6 helical transmembrane segments spans residues 34 to 54 (YMAY…LSVL), 97 to 117 (MTAV…SSID), 136 to 156 (FSLY…SLAA), 178 to 198 (LLGW…YLLV), 207 to 227 (HALI…VGFA), and 242 to 262 (ALAA…IVLI).

It belongs to the UPF0761 family.

It is found in the cell inner membrane. This is UPF0761 membrane protein VFMJ11_0098 from Aliivibrio fischeri (strain MJ11) (Vibrio fischeri).